Consider the following 1675-residue polypeptide: Clathrin heavy chain 1 (1675 aa).

Position 2 is an N-acetylalanine (Ala-2). The tract at residues 2-479 (AQILPIRFQE…VDPTLALSVY (478 aa)) is globular terminal domain. WD40-like repeat stretches follow at residues 24–67 (NIGF…RPIS), 68–107 (ADSA…MTDD), 108–149 (VTFW…SSLA), 150–195 (GCQI…QPIE), 196–257 (GHAA…PEAQ), 258–301 (NDFP…ISGE), and 302–330 (TIFV…VCVE). Position 67 is a phosphoserine (Ser-67). The residue at position 105 (Thr-105) is a Phosphothreonine. At Tyr-184 the chain carries Phosphotyrosine. Thr-394 carries the phosphothreonine modification. A binding site for the uncoating ATPase, involved in lattice disassembly region spans residues 449-465 (EKWLKEDKLECSEELGD). Residues 480 to 523 (LRANVPNKVIQCFAETGQVQKIVLYAKKVGYTPDWIFLLRNVMR) are flexible linker. Residues 524 to 634 (ISPDQGQQFA…RALEHFTDLY (111 aa)) form a distal segment region. Residues 524–1675 (ISPDQGQQFA…QPQPGFGYSM (1152 aa)) form a heavy chain arm region. CHCR repeat units follow at residues 537 to 683 (VQDE…QICV), 686 to 828 (ASKY…SEDV), 833 to 972 (ILVV…PLID), 979 to 1124 (LSET…VKEA), 1128 to 1269 (YIKA…FRLA), 1274 to 1420 (LHIV…LLLN), and 1423 to 1566 (LMVL…RECF). The residue at position 634 (Tyr-634) is a Phosphotyrosine. The proximal segment stretch occupies residues 639–1675 (AVVHTHLLNP…QPQPGFGYSM (1037 aa)). An N6-succinyllysine modification is found at Lys-737. Lys-856 is subject to N6-acetyllysine. Tyr-899 carries the post-translational modification Phosphotyrosine. Ser-1167 is subject to Phosphoserine. Tyr-1206 is modified (phosphotyrosine). The interval 1213 to 1522 (AAKLLYNNVS…YLFKGNNRWK (310 aa)) is involved in binding clathrin light chain. The residue at position 1229 (Ser-1229) is a Phosphoserine. Position 1441 is an N6-acetyllysine; alternate (Lys-1441). Lys-1441 is modified (N6-succinyllysine; alternate). Tyr-1477 and Tyr-1487 each carry phosphotyrosine. Ser-1494 carries the post-translational modification Phosphoserine. N6-acetyllysine is present on Lys-1501. Positions 1550–1675 (AEELLQWFLQ…QPQPGFGYSM (126 aa)) are trimerization.

The protein belongs to the clathrin heavy chain family. In terms of assembly, clathrin triskelions, composed of 3 heavy chains and 3 light chains, are the basic subunits of the clathrin coat. In the presence of light chains, hub assembly is influenced by both the pH and the concentration of calcium. Interacts with HIP1. Interacts with DENND1A, DENND1B and DENND1C. Interacts with ERBB2. Interacts with FKBP6. Interacts with OCRL. Interacts with CKAP5 and TACC3 forming the TACC3/ch-TOG/clathrin complex located at spindle inter-microtubules bridges; the complex implicates clathrin triskelions; TACC3 and CLTC are proposed to form a composite microtubule interaction surface. Plays a role in early autophagosome formation. Interacts with ATG16L1 (via N-terminus). Interacts with RFTN1; the interaction occurs in response to pathogens. Interacts with USP2 isoform 2. Interacts with TMEM106B (via N-terminus). Interacts with DNAJC6; this interaction produces a local change in heavy-chain contacts, creating a detectable global distortion of the clathrin coat and leads to the recruitment of HSPA8.

It localises to the cytoplasmic vesicle membrane. Its subcellular location is the membrane. It is found in the coated pit. The protein localises to the melanosome. The protein resides in the cytoplasm. It localises to the cytoskeleton. Its subcellular location is the spindle. In terms of biological role, clathrin is the major protein of the polyhedral coat of coated pits and vesicles. Two different adapter protein complexes link the clathrin lattice either to the plasma membrane or to the trans-Golgi network. Acts as a component of the TACC3/ch-TOG/clathrin complex proposed to contribute to stabilization of kinetochore fibers of the mitotic spindle by acting as inter-microtubule bridge. The TACC3/ch-TOG/clathrin complex is required for the maintenance of kinetochore fiber tension. Plays a role in early autophagosome formation. Interaction with DNAJC6 mediates the recruitment of HSPA8 to the clathrin lattice and creates local destabilization of the lattice promoting uncoating. The sequence is that of Clathrin heavy chain 1 from Mus musculus (Mouse).